The sequence spans 148 residues: Photosystem II extrinsic protein U, chloroplastic (148 aa).

Residues 1-32 (MKLAVFAVLISTVAAFVAPNGVQRAATTELNA) constitute a chloroplast transit peptide. The N-terminal 22 residues, 33–54 (ERREFLSAAAVAAGLAFPLTAN), are a transit peptide targeting the thylakoid.

This sequence belongs to the PsbU family. As to quaternary structure, PSII is composed of 1 copy each of membrane proteins PsbA, PsbB, PsbC, PsbD, PsbE, PsbF, PsbH, PsbI, PsbJ, PsbK, PsbL, PsbM, PsbT, PsbX, PsbY, PsbZ, Psb30/Ycf12, at least 3 peripheral proteins of the oxygen-evolving complex and a large number of cofactors. It forms dimeric complexes. The oxygen-evolving complex may be composed of PsbO, PsbQ', PsbV and PsbU.

Its subcellular location is the plastid. The protein localises to the chloroplast thylakoid membrane. One of the extrinsic, lumenal subunits of photosystem II (PSII), which stabilize and protect the oxygen-evolving complex. PSII is a light-driven water plastoquinone oxidoreductase, using light energy to abstract electrons from H(2)O, generating a proton gradient subsequently used for ATP formation. Stabilizes the structure of photosystem II oxygen-evolving complex (OEC), the ion environment of oxygen evolution and protects the OEC against heat-induced inactivation. In Phaeodactylum tricornutum (Diatom), this protein is Photosystem II extrinsic protein U, chloroplastic.